We begin with the raw amino-acid sequence, 313 residues long: Protein MFI (313 aa).

As to quaternary structure, can homodimerize. Interacts with MFF; the interaction inhibits MFF interaction with DNM1L. As to expression, enriched in the pancreatic beta cell and the testis and is expressed at low levels in other tissues tested.

It localises to the cytoplasm. The protein resides in the cytosol. Its subcellular location is the mitochondrion outer membrane. Its function is as follows. Acts as an inhibitor of mitochondrial fission. Interacts with MFF and prevents DNM1L recruitment to mitochondria, promoting a more fused mitochondrial network. In Homo sapiens (Human), this protein is Protein MFI.